The following is a 339-amino-acid chain: Protein pelota homolog (339 aa).

This sequence belongs to the eukaryotic release factor 1 family. Pelota subfamily. Monomer. A divalent metal cation is required as a cofactor.

The protein resides in the cytoplasm. In terms of biological role, may function in recognizing stalled ribosomes, interact with stem-loop structures in stalled mRNA molecules, and effect endonucleolytic cleavage of the mRNA. May play a role in the release non-functional ribosomes and degradation of damaged mRNAs. Has endoribonuclease activity. The chain is Protein pelota homolog from Picrophilus torridus (strain ATCC 700027 / DSM 9790 / JCM 10055 / NBRC 100828 / KAW 2/3).